Consider the following 226-residue polypeptide: MSDGSVERGTKRAEDSLATHQLTVQYKRYYIDVNENTRGRYIKIAELGTNYKSRIILSIVAAKAIVSEISKMLALIDEPSTGEHAPKESSLIKSETLNVDGRKFYVDLKENVRGRFLRIAQMPMNPRQTRQQIAIPSDGIAEIHKVLTEYLAKFGEGHEQENTNTPKITAENKSFLFHSGKNDRGEFVRISEIKLNSGYRNAITVPMSALVDFRKELDNIIANQGK.

It belongs to the PUR DNA-binding protein family.

It localises to the nucleus. The protein localises to the chromosome. Its function is as follows. Probable transcription activator. Binds telomeric DNA containing repeats of the sequence, 5'-TTAGGC-3'. Binds to end-1 promoter, activating end-1 expression, which is required for endoderm specification during embryonic development. The polypeptide is Transcriptional activator plp-1 (Caenorhabditis elegans).